The following is a 583-amino-acid chain: Protein LONG AFTER FAR-RED 3 (583 aa).

Residues 7-27 (FPVMIGFVSAAVFLLISVAYL) form a helical membrane-spanning segment. N55 and N374 each carry an N-linked (GlcNAc...) asparagine glycan.

It belongs to the metallo-dependent hydrolases superfamily. As to expression, expressed at low level in seedlings, roots, leaves, stems, flowers, and siliques.

The protein resides in the membrane. Its subcellular location is the cytoplasm. The protein localises to the perinuclear region. Its function is as follows. Required for phyA-controlled responses to continuous far-red light (FRc) conditions, including the inhibition of hypocotyl elongation and the regulation of XTH15/XTR7 expression. The sequence is that of Protein LONG AFTER FAR-RED 3 from Arabidopsis thaliana (Mouse-ear cress).